Consider the following 389-residue polypeptide: Chalcone synthase 8 (389 aa).

Residue cysteine 164 is part of the active site.

This sequence belongs to the thiolase-like superfamily. Chalcone/stilbene synthases family.

The enzyme catalyses (E)-4-coumaroyl-CoA + 3 malonyl-CoA + 3 H(+) = 2',4,4',6'-tetrahydroxychalcone + 3 CO2 + 4 CoA. It functions in the pathway secondary metabolite biosynthesis; flavonoid biosynthesis. The primary product of this enzyme is 4,2',4',6'-tetrahydroxychalcone (also termed naringenin-chalcone or chalcone) which can under specific conditions spontaneously isomerize into naringenin. This chain is Chalcone synthase 8 (CHS8), found in Medicago sativa (Alfalfa).